The following is a 283-amino-acid chain: Thymidylate synthase (283 aa).

Residue Arg-22 participates in dUMP binding. The active-site Nucleophile is the Cys-160. Residues 180 to 183 (RSCD), Asn-191, and 221 to 223 (HIY) each bind dUMP. Position 183 (Asp-183) interacts with (6R)-5,10-methylene-5,6,7,8-tetrahydrofolate. Ser-282 provides a ligand contact to (6R)-5,10-methylene-5,6,7,8-tetrahydrofolate.

It belongs to the thymidylate synthase family. Bacterial-type ThyA subfamily. As to quaternary structure, homodimer.

It localises to the cytoplasm. The catalysed reaction is dUMP + (6R)-5,10-methylene-5,6,7,8-tetrahydrofolate = 7,8-dihydrofolate + dTMP. Its pathway is pyrimidine metabolism; dTTP biosynthesis. In terms of biological role, catalyzes the reductive methylation of 2'-deoxyuridine-5'-monophosphate (dUMP) to 2'-deoxythymidine-5'-monophosphate (dTMP) while utilizing 5,10-methylenetetrahydrofolate (mTHF) as the methyl donor and reductant in the reaction, yielding dihydrofolate (DHF) as a by-product. This enzymatic reaction provides an intracellular de novo source of dTMP, an essential precursor for DNA biosynthesis. The polypeptide is Thymidylate synthase (Vibrio parahaemolyticus serotype O3:K6 (strain RIMD 2210633)).